A 312-amino-acid polypeptide reads, in one-letter code: Nodulation protein D 2 (312 aa).

Residues 6–63 (LDLNLLVALDALMTKRSVTAAARSINLSQPAMSAAIARLRTYFGDDLFTMRGRELIPT) enclose the HTH lysR-type domain. The segment at residues 23 to 42 (VTAAARSINLSQPAMSAAIA) is a DNA-binding region (H-T-H motif).

It belongs to the LysR transcriptional regulatory family.

Represses the expression of the nodABCIJ-nolO-noeI operon. The polypeptide is Nodulation protein D 2 (nodD2) (Sinorhizobium fredii (strain NBRC 101917 / NGR234)).